The sequence spans 1951 residues: Sodium channel protein type 3 subunit alpha (1951 aa).

Residues 1–128 (MAQALLVPPG…KIAIKILVHS (128 aa)) are Cytoplasmic-facing. Residues 28-60 (RAAEEKAKKPKKEQDIDDENKPKPNSDLEAGKN) are disordered. Positions 46–57 (ENKPKPNSDLEA) are enriched in basic and acidic residues. One copy of the I repeat lies at 110 to 455 (ILTPLNPVRK…QQMLEQLKKQ (346 aa)). The chain crosses the membrane as a helical span at residues 129–146 (LFSMLIMCTILTNCVFMT). The Extracellular portion of the chain corresponds to 147–152 (LSNPPD). Residues 153-174 (WTKNVEYTFTGIYTFESLIKIL) form a helical membrane-spanning segment. At 175 to 188 (ARGFCLEDFTFLRD) the chain is on the cytoplasmic side. Residues 189 to 206 (PWNWLDFSVIVMAYVTEF) form a helical membrane-spanning segment. The Extracellular portion of the chain corresponds to 207–213 (VDLGNVS). The N-linked (GlcNAc...) asparagine glycan is linked to asparagine 211. Residues 214-235 (ALRTFRVLRALKTISVIPGLKT) traverse the membrane as a helical segment. Topologically, residues 236 to 249 (IVGALIQSVKKLSD) are cytoplasmic. A helical membrane pass occupies residues 250 to 269 (VMILTVFCLSVFALIGLQLF). The Extracellular segment spans residues 270 to 369 (MGNLRNKCSQ…NYGYTSFDTF (100 aa)). 5 N-linked (GlcNAc...) asparagine glycosylation sites follow: asparagine 290, asparagine 296, asparagine 302, asparagine 307, and asparagine 339. Positions 370 to 386 (SWAFLSLFRLMTQDYWE) form an intramembrane region, pore-forming. The Extracellular segment spans residues 387–397 (NLYQLTLRAAG). Residues 398–424 (KTYMIFFVLVIFLGSFYLVNLILAVVA) form a helical membrane-spanning segment. The Cytoplasmic portion of the chain corresponds to 425 to 712 (MAYEEQNQAT…LVNLIVMDPF (288 aa)). Serine 484, serine 485, and serine 486 each carry phosphoserine. Disordered regions lie at residues 493 to 529 (SKSA…SESE) and 587 to 633 (VGSE…TEVR). Residues 500 to 509 (RNRRKKRRQR) are compositionally biased toward basic residues. Basic and acidic residues-rich tracts occupy residues 510 to 529 (EHLE…SESE) and 596 to 622 (DEHS…ERRN). One copy of the II repeat lies at 693–965 (CCDAWLKVKH…QIAVGRMQKG (273 aa)). The helical transmembrane segment at 713-730 (VDLAITICIVLNTLFMAM) threads the bilayer. Residues 731 to 738 (EHYPMTQQ) lie on the Extracellular side of the membrane. Residues 739–763 (FSSVLTVGNLVFTGIFTAEMVLKII) form a helical membrane-spanning segment. Topologically, residues 764–773 (AMDPYYYFQE) are cytoplasmic. The chain crosses the membrane as a helical span at residues 774–793 (GWNIFDGIIVSLSLMELGLA). Residues 794 to 797 (NVEG) lie on the Extracellular side of the membrane. A helical membrane pass occupies residues 798–816 (LSVLRSFRLLRVFKLAKSW). Topologically, residues 817–834 (PTLNMLIKIIGNSVGALG) are cytoplasmic. The chain crosses the membrane as a helical span at residues 835 to 855 (NLTLVLAIIVFIFAVVGMQLF). The Extracellular portion of the chain corresponds to 856 to 880 (GKSYKECVCKINVDCKLPRWHMNDF). Cysteines 864 and 870 form a disulfide. The pore-forming intramembrane region spans 881–896 (FHSFLIVFRVLCGEWI). Residues 897–907 (ETMWDCMEVAG) are Extracellular-facing. Cysteine 902 and cysteine 911 are oxidised to a cystine. The helical transmembrane segment at 908–934 (QTMCLIVFMLVMVIGNLVVLNLFLALL) threads the bilayer. The Cytoplasmic portion of the chain corresponds to 935–1156 (LSSFSSDNLA…RKTCYSIVEH (222 aa)). Positions 1068-1112 (TEEFSSESELEESKEKLNATSSSEGSTVDVAPPREGEQAEIEPEE) are disordered. The III repeat unit spans residues 1139–1450 (KGKIWWNLRK…KKYYNAMKKL (312 aa)). A helical transmembrane segment spans residues 1157–1177 (NWFETFIVFMILLSSGALAFE). At 1178–1189 (DIYIEQRKTIKT) the chain is on the extracellular side. Residues 1190 to 1211 (MLEYADKVFTYIFILEMLLKWV) form a helical membrane-spanning segment. At 1212 to 1217 (AYGFQT) the chain is on the cytoplasmic side. Residues 1218–1243 (YFTNAWCWLDFLIVDVSLVSLVANAL) traverse the membrane as a helical segment. Residues 1244-1252 (GYSELGAIK) lie on the Extracellular side of the membrane. A helical membrane pass occupies residues 1253–1271 (SLRTLRALRPLRALSRFEG). Topologically, residues 1272–1284 (MRVVVNALVGAIP) are cytoplasmic. A helical membrane pass occupies residues 1285–1307 (SIMNVLLVCLIFWLIFSIMGVNL). Topologically, residues 1308–1353 (FAGKFYHCVNTTTGNMFEIKEVNNFSDCQALGKQARWKNVKVNFDN) are extracellular. Cysteine 1315 and cysteine 1335 form a disulfide bridge. N-linked (GlcNAc...) asparagine glycosylation is found at asparagine 1317 and asparagine 1331. An intramembrane region (pore-forming) is located at residues 1354-1370 (VGAGYLALLQVATFKGW). Residues 1371-1393 (MDIMYAAVDSRDVKLQPIYEENL) are Extracellular-facing. Residues 1394 to 1419 (YMYLYFVIFIIFGSFFTLNLFIGVII) traverse the membrane as a helical segment. The Cytoplasmic portion of the chain corresponds to 1420–1477 (DNFNQQKKKFGGQDIFMTEEQKKYYNAMKKLGSKKPQKPIPRPANKFQGMVFDFVTRQ). Serine 1452 bears the Phosphoserine; by PKC mark. An IV repeat occupies 1459–1757 (IPRPANKFQG…WEKFDPDATQ (299 aa)). Residues 1478–1496 (VFDISIMILICLNMVTMMV) form a helical membrane-spanning segment. Over 1497-1504 (ETDDQSKY) the chain is Extracellular. The helical transmembrane segment at 1505–1528 (MTLVLSRINLVFIVLFTGEFLLKL) threads the bilayer. Topologically, residues 1529-1538 (ISLRYYYFTI) are cytoplasmic. Residues 1539 to 1556 (GWNIFDFVVVILSIVGMF) form a helical membrane-spanning segment. Residues 1557–1568 (LAELIEKYFVSP) lie on the Extracellular side of the membrane. Residues 1569 to 1591 (TLFRVIRLARIGRILRLIKGAKG) traverse the membrane as a helical segment. Residues 1592–1604 (IRTLLFALMMSLP) lie on the Cytoplasmic side of the membrane. The chain crosses the membrane as a helical span at residues 1605-1628 (ALFNIGLLLFLVMFIYAIFGMSNF). The Extracellular portion of the chain corresponds to 1629–1650 (AYVKKEAGIDDMFNFETFGNSM). The pore-forming intramembrane region spans 1651–1663 (ICLFQITTSAGWD). Residues 1664–1695 (GLLAPILNSAPPDCDPDAIHPGSSVKGDCGNP) lie on the Extracellular side of the membrane. Residues 1696–1721 (SVGIFFFVSYIIISFLVVVNMYIAVI) traverse the membrane as a helical segment. Topologically, residues 1722–1951 (LENFSVATEE…KGKEVRENQK (230 aa)) are cytoplasmic. Positions 1851–1880 (EEVSAAIIQRNYRCYLLKQRLKNISSKYDK) constitute an IQ domain. Positions 1898–1951 (DKLNGNSTPEKTDGSSSTTSPPSYDSVTKPDKEKFEKDKPEKEIKGKEVRENQK) are disordered. Positions 1925–1951 (TKPDKEKFEKDKPEKEIKGKEVRENQK) are enriched in basic and acidic residues.

Belongs to the sodium channel (TC 1.A.1.10) family. Nav1.3/SCN3A subfamily. In terms of assembly, heterooligomer of an alpha subunit, SCN3A, and 1 to 3 regulatory beta subunits including SCN1B and SCN2B; disulfide-linked with some beta subunits like SCN2B. Interacts with NEDD4L; could regulate expression of SCN3A at the plasma membrane through ubiquitination-regulated endocytosis. Interacts with the conotoxin GVIIJ. Interacts with the spider beta/delta-theraphotoxin-Pre1a. Interacts with the spider RTX-VII toxin (AC P0DL75). May be ubiquitinated by NEDD4L; which would promote its endocytosis. In terms of processing, phosphorylation at Ser-1452 by PKC in a highly conserved cytoplasmic loop slows inactivation of the sodium channel and reduces peak sodium currents.

It localises to the cell membrane. The protein resides in the basal cell membrane. The enzyme catalyses Na(+)(in) = Na(+)(out). Its function is as follows. Pore-forming subunit of Nav1.3, a voltage-gated sodium (Nav) channel that directly mediates the depolarizing phase of action potentials in excitable membranes. Navs, also called VGSCs (voltage-gated sodium channels) or VDSCs (voltage-dependent sodium channels), operate by switching between closed and open conformations depending on the voltage difference across the membrane. In the open conformation they allow Na(+) ions to selectively pass through the pore, along their electrochemical gradient. The influx of Na+ ions provokes membrane depolarization, initiating the propagation of electrical signals throughout cells and tissues. In some secretory cell types, it also participates in cell excitability through membrane depolarization and regulates cells responsiveness to stimuli triggering secretion. For instance, it controls the release of serotonin/5-hydroxytryptamine by enterochromaffin cells and is required for both glucagon- and glucose-induced insulin secretion in pancreatic endocrine cells. This Rattus norvegicus (Rat) protein is Sodium channel protein type 3 subunit alpha.